We begin with the raw amino-acid sequence, 329 residues long: Ribonucleoside-diphosphate reductase subunit beta (329 aa).

Aspartate 66, glutamate 97, and histidine 101 together coordinate Fe cation. Tyrosine 105 is an active-site residue. The Fe cation site is built by glutamate 164, glutamate 198, and histidine 201.

The protein belongs to the ribonucleoside diphosphate reductase small chain family. Tetramer of two alpha and two beta subunits. Requires Fe cation as cofactor.

The enzyme catalyses a 2'-deoxyribonucleoside 5'-diphosphate + [thioredoxin]-disulfide + H2O = a ribonucleoside 5'-diphosphate + [thioredoxin]-dithiol. In terms of biological role, provides the precursors necessary for DNA synthesis. Catalyzes the biosynthesis of deoxyribonucleotides from the corresponding ribonucleotides. The sequence is that of Ribonucleoside-diphosphate reductase subunit beta (bnrdF) from Bacillus pumilus (Bacillus mesentericus).